A 270-amino-acid chain; its full sequence is Probable septum site-determining protein MinC (270 aa).

A disordered region spans residues 105 to 129 (DRRAPSSKAADEAPVQQAEPAAPAA). Over residues 116–129 (EAPVQQAEPAAPAA) the composition is skewed to low complexity.

This sequence belongs to the MinC family. In terms of assembly, interacts with MinD and FtsZ.

Cell division inhibitor that blocks the formation of polar Z ring septums. Rapidly oscillates between the poles of the cell to destabilize FtsZ filaments that have formed before they mature into polar Z rings. Prevents FtsZ polymerization. This is Probable septum site-determining protein MinC from Burkholderia pseudomallei (strain 1106a).